A 457-amino-acid chain; its full sequence is UDP-N-acetylmuramate--L-alanine ligase (457 aa).

ATP is bound at residue 118-124 (GTHGKTT).

Belongs to the MurCDEF family.

It localises to the cytoplasm. It carries out the reaction UDP-N-acetyl-alpha-D-muramate + L-alanine + ATP = UDP-N-acetyl-alpha-D-muramoyl-L-alanine + ADP + phosphate + H(+). The protein operates within cell wall biogenesis; peptidoglycan biosynthesis. In terms of biological role, cell wall formation. The polypeptide is UDP-N-acetylmuramate--L-alanine ligase (Clostridium perfringens (strain 13 / Type A)).